The chain runs to 502 residues: DEP domain-containing protein 7 (502 aa).

A DEP domain is found at 37 to 127; it reads LQTQVEVKKR…SSCSLYRFTT (91 aa).

This sequence belongs to the DEPDC7 family.

The sequence is that of DEP domain-containing protein 7 (DEPDC7) from Macaca fascicularis (Crab-eating macaque).